A 77-amino-acid chain; its full sequence is Conotoxin PnMEKL-04 (77 aa).

Residues 1 to 19 form the signal peptide; sequence MEKLTILLLVAAVLMSTQA. The propeptide occupies 20–45; that stretch reads LPQGGGENRLKENIKFLLKRKTAADR. Cystine bridges form between Cys51–Cys65, Cys58–Cys69, and Cys64–Cys73.

This sequence belongs to the conotoxin O2 superfamily. As to expression, expressed by the venom duct.

It is found in the secreted. The sequence is that of Conotoxin PnMEKL-04 from Conus pennaceus (Feathered cone).